A 152-amino-acid polypeptide reads, in one-letter code: UPF0266 membrane protein KPK_1957 (152 aa).

3 helical membrane passes run 6 to 26 (LVII…QFIM), 45 to 65 (VDGL…ITQH), and 67 to 87 (TPIT…LFWI).

It belongs to the UPF0266 family.

It localises to the cell inner membrane. In Klebsiella pneumoniae (strain 342), this protein is UPF0266 membrane protein KPK_1957.